The sequence spans 832 residues: Subtilisin-like protease SBT2.1 (832 aa).

Positions 1–24 (MDESSLVRFVFLLCLVSSSVFCLA) are cleaved as a signal peptide. The propeptide at 25–138 (ESDQNATVSS…VVLDFLVEKA (114 aa)) is activation peptide. 2 N-linked (GlcNAc...) asparagine glycosylation sites follow: Asn29 and Asn73. One can recognise an Inhibitor I9 domain in the interval 36–136 (VYIVTLKDRP…ENVVLDFLVE (101 aa)). The Peptidase S8 domain occupies 145-684 (FLGLPRGAWL…SGFVNATAAL (540 aa)). Asp172 (charge relay system) is an active-site residue. N-linked (GlcNAc...) asparagine glycosylation is present at Asn233. Residue His247 is the Charge relay system of the active site. 7 N-linked (GlcNAc...) asparagine glycosylation sites follow: Asn272, Asn315, Asn390, Asn417, Asn470, Asn515, and Asn522. The PA domain occupies 408–503 (LVLATHALRN…MDIPGILISS (96 aa)). Ser609 acts as the Charge relay system in catalysis. Asn679, Asn705, Asn713, Asn723, Asn760, and Asn801 each carry an N-linked (GlcNAc...) asparagine glycan.

This sequence belongs to the peptidase S8 family.

The protein localises to the secreted. This Arabidopsis thaliana (Mouse-ear cress) protein is Subtilisin-like protease SBT2.1.